A 301-amino-acid polypeptide reads, in one-letter code: Outer membrane porin G (301 aa).

Residues 1–21 form the signal peptide; it reads MKKLLPCTALVMCAGMACAQA. Transmembrane regions (beta stranded) follow at residues 27–35, 47–57, 64–72, 89–98, 104–112, 129–136, 149–158, 172–182, 186–195, 201–209, 213–222, 230–238, 240–248, 254–265, 269–279, and 289–300; these read WHFNIGAMY, MDGLAEPSVYF, WRIALAYYQ, RPELEVHYQF, FSFGLTGGF, NMQRWKIA, FNGWLSMYKF, VETETGLQYTF, VALRVNYYLE, DDSRNNGEF, EIRAYLPLTL, YTRIGLDRW, NWDWQDDIE, FNRVGLFYGYDF, LSVSLEYAFEW, and KFHYAGVGVNYS.

Monomer.

It is found in the cell outer membrane. Its function is as follows. Forms channels functionally larger than those of classical porins. Functionally, may act as a regulator of the RCS-phosphorelay signal transduction pathway. This is Outer membrane porin G (ompG) from Escherichia coli (strain K12).